Here is a 320-residue protein sequence, read N- to C-terminus: Malate dehydrogenase (320 aa).

NAD(+) is bound by residues 10 to 15 (GSGMIG) and Asp-34. Residues Arg-83 and Arg-89 each contribute to the substrate site. NAD(+) is bound by residues Asn-96 and 119–121 (ITN). 2 residues coordinate substrate: Asn-121 and Arg-152. His-176 acts as the Proton acceptor in catalysis.

Belongs to the LDH/MDH superfamily. MDH type 3 family.

The catalysed reaction is (S)-malate + NAD(+) = oxaloacetate + NADH + H(+). Functionally, catalyzes the reversible oxidation of malate to oxaloacetate. The sequence is that of Malate dehydrogenase from Brucella suis (strain ATCC 23445 / NCTC 10510).